A 188-amino-acid polypeptide reads, in one-letter code: Elongation factor P (188 aa).

An N6-(3,6-diaminohexanoyl)-5-hydroxylysine modification is found at Lys34.

This sequence belongs to the elongation factor P family. May be beta-lysylated on the epsilon-amino group of Lys-34 by the combined action of EpmA and EpmB, and then hydroxylated on the C5 position of the same residue by EpmC (if this protein is present). Lysylation is critical for the stimulatory effect of EF-P on peptide-bond formation. The lysylation moiety may extend toward the peptidyltransferase center and stabilize the terminal 3-CCA end of the tRNA. Hydroxylation of the C5 position on Lys-34 may allow additional potential stabilizing hydrogen-bond interactions with the P-tRNA.

The protein localises to the cytoplasm. Its pathway is protein biosynthesis; polypeptide chain elongation. In terms of biological role, involved in peptide bond synthesis. Alleviates ribosome stalling that occurs when 3 or more consecutive Pro residues or the sequence PPG is present in a protein, possibly by augmenting the peptidyl transferase activity of the ribosome. Modification of Lys-34 is required for alleviation. The chain is Elongation factor P from Actinobacillus succinogenes (strain ATCC 55618 / DSM 22257 / CCUG 43843 / 130Z).